A 281-amino-acid polypeptide reads, in one-letter code: MEKIAIITDTTADLTEEFIKENDINVLSFRIIYKDKEYKDKVDITSEEVYRNFEIEVPKSSMPSLQDMEDLYKKLEEEGYTHAIGITLSSGLSGIFNGLKMIADEHSKIKSFIYDSKLISLGEGALVEECSKMIHNNKSFDEIVKAIPEIRKKIHLFFVVGTLDYLKKGGRIGKIAGTIGKLLNIKPIVSVDDNGVYYAYDKVRGRKQSLNRVMEIAKDITKNSKCRAYVMHGDAEKESKEFFKKVKELPNINNAFYNGCISPVSGVHSGPGLVGLVLLEE.

Residues 4-280 form the DegV domain; sequence IAIITDTTAD…PGLVGLVLLE (277 aa). Hexadecanoate is bound by residues Ser-60 and Ser-93.

Functionally, may bind long-chain fatty acids, such as palmitate, and may play a role in lipid transport or fatty acid metabolism. The chain is DegV domain-containing protein CA_C0948 from Clostridium acetobutylicum (strain ATCC 824 / DSM 792 / JCM 1419 / IAM 19013 / LMG 5710 / NBRC 13948 / NRRL B-527 / VKM B-1787 / 2291 / W).